The chain runs to 240 residues: Endo-chitosanase B (240 aa).

Residues 1-17 (MRLSEILAVALVTGATA) form the signal peptide. Asparagine 86 carries N-linked (GlcNAc...) asparagine glycosylation.

The protein belongs to the glycosyl hydrolase 75 family.

The protein resides in the secreted. It carries out the reaction Endohydrolysis of beta-(1-&gt;4)-linkages between D-glucosamine residues in a partly acetylated chitosan.. In terms of biological role, chitosanase catalyzing the endo-type cleavage of chitosan, the deacylated form of chitin. Chitosanase may be crucial in the degradation of the deacetylated portion of chitin in the fungal cell wall. Chitoolisaccharides produced by the hydrolysis of partially N-acetylated chitosan are known to have many biological activities, including antibacterial activity, immune-enhancing effects, and elicitor activity. This Aspergillus oryzae (Yellow koji mold) protein is Endo-chitosanase B (csnB).